The following is a 132-amino-acid chain: Fatty acid-binding protein 12 (132 aa).

Residues arginine 107 and 127 to 129 (RTY) each bind a fatty acid.

The protein belongs to the calycin superfamily. Fatty-acid binding protein (FABP) family. Highly expressed in adult retina and testis.

Functionally, may play a role in lipid transport. The polypeptide is Fatty acid-binding protein 12 (Fabp12) (Mus musculus (Mouse)).